We begin with the raw amino-acid sequence, 406 residues long: Phosphorylase b kinase gamma catalytic chain, liver/testis isoform (406 aa).

The 268-residue stretch at 24–291 folds into the Protein kinase domain; sequence YDPKDIIGRG…AEQALQHPFF (268 aa). Residues 30 to 38 and K53 each bind ATP; that span reads IGRGVSSVV. Residue D153 is the Proton acceptor of the active site. A calmodulin-binding (domain-N) region spans residues 306-330; it reads QRFRVAVWTILAAGRVALSSHRLRP. A calmodulin-binding (domain-C) region spans residues 346–370; it reads VRRLIDNCAFRLYGHWVKKGEQQNR.

This sequence belongs to the protein kinase superfamily. CAMK Ser/Thr protein kinase family. Hexadecamer of 4 heterotetramers, each composed of alpha, beta, gamma, and delta subunits. Alpha (PHKA1 or PHKA2) and beta (PHKB) are regulatory subunits, gamma (PHKG1 or PHKG2) is the catalytic subunit, and delta is calmodulin.

It catalyses the reaction 2 ATP + phosphorylase b = 2 ADP + phosphorylase a.. Its function is as follows. Catalytic subunit of the phosphorylase b kinase (PHK), which mediates the neural and hormonal regulation of glycogen breakdown (glycogenolysis) by phosphorylating and thereby activating glycogen phosphorylase. May regulate glycogeneolysis in the testis. In vitro, phosphorylates PYGM. The protein is Phosphorylase b kinase gamma catalytic chain, liver/testis isoform (Phkg2) of Mus musculus (Mouse).